The sequence spans 326 residues: Ribosomal large subunit pseudouridine synthase D (326 aa).

The 74-residue stretch at 18 to 91 (QRLDQALAEM…IPLDIVYEDE (74 aa)) folds into the S4 RNA-binding domain. Residue Asp-139 is part of the active site.

Belongs to the pseudouridine synthase RluA family.

The protein localises to the cytoplasm. The enzyme catalyses uridine(1911/1915/1917) in 23S rRNA = pseudouridine(1911/1915/1917) in 23S rRNA. Its function is as follows. Responsible for synthesis of pseudouridine from uracil at positions 1911, 1915 and 1917 in 23S ribosomal RNA. This chain is Ribosomal large subunit pseudouridine synthase D (rluD), found in Escherichia coli O157:H7.